The chain runs to 279 residues: MQNHVISLASAAERRAHIAATFGSRGIPFQFFDALMPSERLERAMAELVPGLSAHPYLSGVEKACFMSHAVLWEQALDEGVPYIAVFEDDVLLGEGAEQFLAEDTWLQERFDPDSAFVVRLETMFMHVLTSPSGVADYGGRAFPLLESEHCGTAGYIISRKAMRFFLDRFAVLPPERLHPVDLMMFGNPDDREGMPVCQLNPALCAQELHYAKFHDQNSALGSLIEHDRRLNRKQQWRDSPANTFKHRLIRALTKIGREREKRRQRREQLIGKIIVPFQ.

It belongs to the glycosyltransferase 25 family.

The protein operates within glycan metabolism; lacto-N-neotetraose biosynthesis. It functions in the pathway bacterial outer membrane biogenesis; lipooligosaccharide biosynthesis. In terms of biological role, adds the second galactose to the lacto-N-tetraose chain in lipooligosaccharide (LOS). This is Lacto-N-neotetraose biosynthesis glycosyltransferase LgtB (lgtB) from Neisseria gonorrhoeae.